A 382-amino-acid polypeptide reads, in one-letter code: Galactokinase (382 aa).

34–37 (EHTD) is a substrate binding site. Position 124 to 130 (124 to 130 (GAGLSSS)) interacts with ATP. Mg(2+)-binding residues include serine 130 and glutamate 162. Residue aspartate 174 is the Proton acceptor of the active site. Position 223 (tyrosine 223) interacts with substrate.

This sequence belongs to the GHMP kinase family. GalK subfamily.

It is found in the cytoplasm. It carries out the reaction alpha-D-galactose + ATP = alpha-D-galactose 1-phosphate + ADP + H(+). Its pathway is carbohydrate metabolism; galactose metabolism. In terms of biological role, catalyzes the transfer of the gamma-phosphate of ATP to D-galactose to form alpha-D-galactose-1-phosphate (Gal-1-P). The protein is Galactokinase of Salmonella paratyphi C (strain RKS4594).